The primary structure comprises 988 residues: UvrABC system protein A (988 aa).

33–40 provides a ligand contact to ATP; it reads GLSGSGKS. The C4-type zinc-finger motif lies at 255 to 282; it reads CPVCDYSLPELEPRLFSFNAPVGACPSC. ABC transporter domains lie at 312–589 and 609–938; these read WDRR…PRSL and PNPK…QFLA. 642 to 649 contacts ATP; it reads GVSGSGKS. The segment at 741–767 adopts a C4-type zinc-finger fold; sequence CEACQGDGMIKVEMHFLPDVYVPCDVC. The interval 948-988 is disordered; the sequence is ETRPAAMANKPDARPPRKVKPEKVAKATKTATKKTAKKKAS. Basic and acidic residues predominate over residues 958 to 972; that stretch reads PDARPPRKVKPEKVA. A compositionally biased stretch (basic residues) spans 978–988; sequence ATKKTAKKKAS.

The protein belongs to the ABC transporter superfamily. UvrA family. In terms of assembly, forms a heterotetramer with UvrB during the search for lesions.

It is found in the cytoplasm. The UvrABC repair system catalyzes the recognition and processing of DNA lesions. UvrA is an ATPase and a DNA-binding protein. A damage recognition complex composed of 2 UvrA and 2 UvrB subunits scans DNA for abnormalities. When the presence of a lesion has been verified by UvrB, the UvrA molecules dissociate. This is UvrABC system protein A from Xanthomonas campestris pv. campestris (strain ATCC 33913 / DSM 3586 / NCPPB 528 / LMG 568 / P 25).